The following is a 1102-amino-acid chain: Trafficking protein particle complex II-specific subunit 130 (1102 aa).

This sequence belongs to the TMEM1 family. As to quaternary structure, part of the multisubunit TRAPP (transport protein particle) II complex composed of BET3, BET5, TRS20, TRS23, TRS31, TRS33, TRS65, TRS120 and TRS130. Interacts with YPT31 and YPT32.

It is found in the golgi apparatus. In terms of biological role, specific subunit of the TRAPP II complex, a highly conserved vesicle tethering complex that functions in the late Golgi as a guanine nucleotide exchange factor (GEF) for the Golgi YPT1 GTPase. TRS130 plays a role in the YPT GEF activity of TRAPP II in concert with the two other TRAPP II-specific subunits TRS65 and TRS120. Required for both the cytoplasm-to-vacuole targeting (Cvt) pathway and starvation-induced autophagy through its role in ATG8 and ATG9 trafficking. This Saccharomyces cerevisiae (strain ATCC 204508 / S288c) (Baker's yeast) protein is Trafficking protein particle complex II-specific subunit 130 (TRS130).